Reading from the N-terminus, the 298-residue chain is 4-hydroxy-tetrahydrodipicolinate synthase (298 aa).

Thr51 is a binding site for pyruvate. The active-site Proton donor/acceptor is Tyr139. Lys167 (schiff-base intermediate with substrate) is an active-site residue. Ile209 provides a ligand contact to pyruvate.

Belongs to the DapA family. As to quaternary structure, homotetramer; dimer of dimers.

It localises to the cytoplasm. It carries out the reaction L-aspartate 4-semialdehyde + pyruvate = (2S,4S)-4-hydroxy-2,3,4,5-tetrahydrodipicolinate + H2O + H(+). Its pathway is amino-acid biosynthesis; L-lysine biosynthesis via DAP pathway; (S)-tetrahydrodipicolinate from L-aspartate: step 3/4. Catalyzes the condensation of (S)-aspartate-beta-semialdehyde [(S)-ASA] and pyruvate to 4-hydroxy-tetrahydrodipicolinate (HTPA). The sequence is that of 4-hydroxy-tetrahydrodipicolinate synthase from Haemophilus influenzae (strain ATCC 51907 / DSM 11121 / KW20 / Rd).